The chain runs to 156 residues: Phosphopantetheine adenylyltransferase (156 aa).

Thr9 contributes to the substrate binding site. Residues 9-10 (TF) and His17 contribute to the ATP site. Substrate-binding residues include Lys41, Leu73, and Arg87. Residues 88–90 (GVR), Glu98, and 123–129 (WAFVSST) each bind ATP.

The protein belongs to the bacterial CoaD family. In terms of assembly, homohexamer. Mg(2+) serves as cofactor.

The protein resides in the cytoplasm. The enzyme catalyses (R)-4'-phosphopantetheine + ATP + H(+) = 3'-dephospho-CoA + diphosphate. Its pathway is cofactor biosynthesis; coenzyme A biosynthesis; CoA from (R)-pantothenate: step 4/5. Functionally, reversibly transfers an adenylyl group from ATP to 4'-phosphopantetheine, yielding dephospho-CoA (dPCoA) and pyrophosphate. The chain is Phosphopantetheine adenylyltransferase from Haemophilus influenzae (strain 86-028NP).